The chain runs to 169 residues: Cilia- and flagella-associated protein 68 (169 aa).

2 mn regions span residues 98–109 and 139–149; these read TTYDTSYNNRRP and KSTYMTSYSKP.

Belongs to the CFAP68 family. As to quaternary structure, microtubule inner protein component of sperm flagellar doublet microtubules.

The protein resides in the cytoplasm. Its subcellular location is the cytoskeleton. It localises to the cilium axoneme. It is found in the flagellum axoneme. The protein localises to the nucleus. The protein resides in the cell projection. Its subcellular location is the cilium. Microtubule inner protein (MIP) part of the dynein-decorated doublet microtubules (DMTs) in cilia axoneme, which is required for motile cilia beating. The polypeptide is Cilia- and flagella-associated protein 68 (CFAP68) (Bos taurus (Bovine)).